The primary structure comprises 895 residues: Collagen alpha-1(I) chain (895 aa).

Residues 1–895 (GPMGPSGPRG…PGPIGPPGPR (895 aa)) form a disordered region. Residues 20-39 (PQGFQGPPGEPGEPGASGPM) show a composition bias toward low complexity. Over residues 51-65 (NGDDGEAGKPGRPGE) the composition is skewed to basic and acidic residues. Position 90 is a phosphoserine (Ser90). Composition is skewed to low complexity over residues 98-114 (DAGP…PGEN) and 137-150 (PAGA…TGAA). A compositionally biased stretch (pro residues) spans 152–164 (PPGPTGPAGPPGF). Composition is skewed to low complexity over residues 198–237 (AGAA…RGPS), 302–336 (ERGF…PGEA), 348–374 (KGIT…QDGR), 383–399 (ARGQ…KGAA), 553–564 (TGPSGPAGPTGA), and 575–593 (AGFA…KGDA). Position 556 is a phosphoserine (Ser556). The span at 595–607 (PPGPAGPAGPPGP) shows a compositional bias: pro residues. Composition is skewed to low complexity over residues 608–635 (IGSV…AGRV), 660–669 (ETGPAGRPGE), and 679–703 (AGEK…QGIA). Residues 741–751 (PPGPVGPPGIA) show a composition bias toward pro residues. The span at 753 to 768 (PPGESGREGSPGAEGS) shows a compositional bias: low complexity. Pro residues predominate over residues 787–802 (AGPPGAPGAPGAPGPV). Composition is skewed to low complexity over residues 823–838 (IGPV…QGPR) and 853–886 (PGEQ…NGIP).

The protein belongs to the fibrillar collagen family. In terms of assembly, trimers of one alpha 2(I) and two alpha 1(I) chains. In terms of processing, prolines at the third position of the tripeptide repeating unit (G-X-Y) are hydroxylated in some or all of the chains. Forms the fibrils of tendon, ligaments and bones. In bones, the fibrils are mineralized with calcium hydroxyapatite.

Its subcellular location is the secreted. The protein resides in the extracellular space. It is found in the extracellular matrix. Type I collagen is a member of group I collagen (fibrillar forming collagen). The sequence is that of Collagen alpha-1(I) chain from Equus sp.